A 155-amino-acid chain; its full sequence is Pathogenesis-related protein A (155 aa).

This sequence belongs to the BetVI family.

This Petroselinum crispum (Parsley) protein is Pathogenesis-related protein A (PCPR1-1).